We begin with the raw amino-acid sequence, 201 residues long: Imidazoleglycerol-phosphate dehydratase (201 aa).

The protein belongs to the imidazoleglycerol-phosphate dehydratase family.

It is found in the cytoplasm. It catalyses the reaction D-erythro-1-(imidazol-4-yl)glycerol 3-phosphate = 3-(imidazol-4-yl)-2-oxopropyl phosphate + H2O. It participates in amino-acid biosynthesis; L-histidine biosynthesis; L-histidine from 5-phospho-alpha-D-ribose 1-diphosphate: step 6/9. This Prochlorococcus marinus (strain AS9601) protein is Imidazoleglycerol-phosphate dehydratase.